Reading from the N-terminus, the 306-residue chain is tRNA dimethylallyltransferase (306 aa).

12–19 (GPTASGKT) is an ATP binding site. 14–19 (TASGKT) contributes to the substrate binding site. Interaction with substrate tRNA regions lie at residues 37 to 40 (DSAL), 161 to 165 (QRLSR), and 242 to 247 (RCVGYR).

It belongs to the IPP transferase family. In terms of assembly, monomer. Requires Mg(2+) as cofactor.

The catalysed reaction is adenosine(37) in tRNA + dimethylallyl diphosphate = N(6)-dimethylallyladenosine(37) in tRNA + diphosphate. Its function is as follows. Catalyzes the transfer of a dimethylallyl group onto the adenine at position 37 in tRNAs that read codons beginning with uridine, leading to the formation of N6-(dimethylallyl)adenosine (i(6)A). In Shewanella amazonensis (strain ATCC BAA-1098 / SB2B), this protein is tRNA dimethylallyltransferase.